A 302-amino-acid chain; its full sequence is Probable alpha-L-glutamate ligase (302 aa).

Residues M104–E287 form the ATP-grasp domain. ATP is bound by residues K141, E178–F179, D187, and R211–N213. Mg(2+) is bound by residues D248, E260, and N262. 3 residues coordinate Mn(2+): D248, E260, and N262.

This sequence belongs to the RimK family. The cofactor is Mg(2+). Requires Mn(2+) as cofactor.

In Psychromonas ingrahamii (strain DSM 17664 / CCUG 51855 / 37), this protein is Probable alpha-L-glutamate ligase.